We begin with the raw amino-acid sequence, 311 residues long: Cytosolic Fe-S cluster assembly factor Nubp1 homolog (311 aa).

A disordered region spans residues 1-21 (MQAPPPEHCPGVESEEAGKGS). Residues Cys9, Cys23, Cys26, and Cys32 each coordinate [4Fe-4S] cluster. 63-70 (GKGGVGKS) contributes to the ATP binding site. 2 residues coordinate [4Fe-4S] cluster: Cys240 and Cys243.

The protein belongs to the Mrp/NBP35 ATP-binding proteins family. NUBP1/NBP35 subfamily. In terms of assembly, heterotetramer of 2 Nubp1 and 2 Nubp2 chains. [4Fe-4S] cluster serves as cofactor.

It is found in the cytoplasm. Functionally, component of the cytosolic iron-sulfur (Fe/S) protein assembly (CIA) machinery. Required for maturation of extramitochondrial Fe-S proteins. The Nubp1-Nubp2 heterotetramer forms a Fe-S scaffold complex, mediating the de novo assembly of an Fe-S cluster and its transfer to target apoproteins. In Drosophila melanogaster (Fruit fly), this protein is Cytosolic Fe-S cluster assembly factor Nubp1 homolog.